Here is a 144-residue protein sequence, read N- to C-terminus: Heme transporter hrg1-B (144 aa).

4 helical membrane passes run 6–26, 38–58, 71–91, and 107–127; these read IYISVGYSTFGMLVGFSAFIV, AMGGLSGVLALWALVTHIMYI, FFMFVSSVFSLLAVAAFATFI, and FYLSAVWSFMTLKWAFLLGLY. A Di-leucine motif motif is present at residues 140–141; sequence IL.

The protein belongs to the HRG family.

The protein resides in the endosome membrane. It localises to the lysosome membrane. It is found in the cytoplasmic vesicle. The protein localises to the phagosome membrane. It carries out the reaction heme b(in) = heme b(out). Its function is as follows. Heme transporter that regulates intracellular heme availability through the endosomal or lysosomal compartment. In macrophages, is the heme transporter for heme-iron recycling. Essential for macrophage iron homeostasis, transports heme from the phagolysosome to the cytoplasm during erythrophagocytosis (EP). The chain is Heme transporter hrg1-B (slc48a1a) from Danio rerio (Zebrafish).